The sequence spans 825 residues: AP-3 complex subunit delta (825 aa).

10 HEAT repeats span residues 131–168 (GLAR…QYPE), 169–205 (AISA…RAPK), 207–243 (YLEF…YEPR), 244–281 (LVKK…LVGH), 285–323 (DKLA…THPS), 324–360 (LVSA…KENI), 363–400 (IVKT…KSTY), 469–513 (EKRT…LAHR), 515–547 (LLQA…LWVE), and 548–584 (KIVS…IVNT). Positions 787–825 (STNQGSMGDIVLETKSPIRVEKKKSKKKKKKKEKTSGKE) are disordered. A compositionally biased stretch (basic residues) spans 807–819 (EKKKSKKKKKKKE).

This sequence belongs to the adaptor complexes large subunit family. As to quaternary structure, adaptor protein complex 3 (AP-3) is a heterotetramer composed of 2 large adaptins (apl5 and apl6), a medium adaptin (apm3) and a small adaptin (aps3).

It localises to the golgi apparatus. It is found in the cytoplasmic vesicle. The protein resides in the clathrin-coated vesicle membrane. In terms of biological role, part of the AP-3 complex, an adaptor-related complex which is not clathrin-associated. The complex is associated with the Golgi region as well as more peripheral structures. It facilitates the budding of vesicles from the Golgi membrane and may be directly involved in trafficking to the vacuole. The polypeptide is AP-3 complex subunit delta (apl5) (Schizosaccharomyces pombe (strain 972 / ATCC 24843) (Fission yeast)).